Here is a 238-residue protein sequence, read N- to C-terminus: RNA-free ribonuclease P (238 aa).

This sequence belongs to the HARP family.

It catalyses the reaction Endonucleolytic cleavage of RNA, removing 5'-extranucleotides from tRNA precursor.. Functionally, RNA-free RNase P that catalyzes the removal of the 5'-leader sequence from pre-tRNA to produce the mature 5'-terminus. The polypeptide is RNA-free ribonuclease P (Hyperthermus butylicus (strain DSM 5456 / JCM 9403 / PLM1-5)).